A 407-amino-acid polypeptide reads, in one-letter code: D-galactonate dehydratase family member Pjdr2_1176 (407 aa).

Mg(2+) is bound at residue aspartate 208. D-arabinonate is bound at residue histidine 210. Residues glutamate 234 and glutamate 260 each coordinate Mg(2+). Glutamate 260, arginine 281, and glutamate 337 together coordinate D-arabinonate.

This sequence belongs to the mandelate racemase/muconate lactonizing enzyme family. GalD subfamily.

Has no detectable activity with D-mannonate and with a panel of 70 other acid sugars (in vitro), in spite of the conservation of the residues that are expected to be important for catalytic activity and cofactor binding. May have evolved a divergent function. The chain is D-galactonate dehydratase family member Pjdr2_1176 from Paenibacillus sp. (strain JDR-2).